The following is a 281-amino-acid chain: MTPILNHYFARINWSGAAAVNIDTLRALHLKHNCTIPFENLDVLLPREIQLDNQSPEEKLVIARRGGYCFEQNGVFERVLRELGFNVRSLLGRVVLSNPPALPPRTHRLLLVELEEEKWIADVGFGGQTLTAPIRLVSDLVQTTPHGEYRLLQEGDDWVLQFNHHQHWQSMYRFDLCEQQQSDYVMGNFWSAHWPQSHFRHHLLMCRHLPDGGKLTLTNFHFTHYENGHAVEQRNLPDVASLYAVMQEQFGLGVDDAKHGFTVDELALVMAAFDTHPEAGK.

Catalysis depends on cysteine 69, which acts as the Acyl-thioester intermediate. Active-site residues include histidine 107 and aspartate 122. An N6-acetyllysine mark is found at lysine 214 and lysine 281.

It belongs to the arylamine N-acetyltransferase family. Homodimer. Acetylated on Lys-214 and Lys-281. Deacetylated by CobB.

It localises to the cytoplasm. It carries out the reaction an arylamine + acetyl-CoA = an N-acetylarylamine + CoA. The enzyme catalyses an N-hydroxyarylamine + acetyl-CoA = an N-acetoxyarylamine + CoA. With respect to regulation, inhibited by salicylic acid, acetylsalicylic acid, 2,6-dichrolo-4-nitrophenol, N-ethylmaleimide and iodoacetamide. Catalyzes the acetyl-CoA-dependent N-acetylation of aromatic amines, and, probably, the O-acetylation of N-hydroxyarylamines. In vitro, catalyzes the N-acetylation of various arylamines such as aminobenzoic acid, aminophenol, aminotoluene, phenetidine, anisidine, aniline, isoniazid and 2-amino-fluorene. N-hydroxyarylamine O-acetyltransferase activity has not been assayed directly, however, NhoA activity is required for the mutagenicity of nitroaromatic compounds, suggesting that it also has O-acetyltransferase activity. In Escherichia coli (strain K12), this protein is Arylamine N-acetyltransferase (nhoA).